Here is a 618-residue protein sequence, read N- to C-terminus: Glucose starvation modulator protein 1 (618 aa).

Residues cysteine 20–cysteine 48 constitute a DNA-binding region (zn(2)-C6 fungal-type). The interval alanine 325–glutamate 352 is disordered. Over residues alanine 335–glutamate 352 the composition is skewed to basic and acidic residues. Residues leucine 466–glycine 538 enclose the PAS domain.

This sequence belongs to the ERT1/acuK family.

It localises to the nucleus. Transcription factor which regulates nonfermentable carbon utilization. Binds specifically to 5'-CGGN(8)CGG-3' and 5'-CGGN(9)CGG-3' sequences in the promoter region. This chain is Glucose starvation modulator protein 1 (GSM1), found in Saccharomyces cerevisiae (strain ATCC 204508 / S288c) (Baker's yeast).